A 303-amino-acid chain; its full sequence is UDP-N-acetylenolpyruvoylglucosamine reductase (303 aa).

Residues 28–195 enclose the FAD-binding PCMH-type domain; that stretch reads KTGGPAQYLA…ISATFGLEPG (168 aa). Residue arginine 174 is part of the active site. Residue serine 224 is the Proton donor of the active site. Glutamate 294 is a catalytic residue.

It belongs to the MurB family. It depends on FAD as a cofactor.

It is found in the cytoplasm. The catalysed reaction is UDP-N-acetyl-alpha-D-muramate + NADP(+) = UDP-N-acetyl-3-O-(1-carboxyvinyl)-alpha-D-glucosamine + NADPH + H(+). It participates in cell wall biogenesis; peptidoglycan biosynthesis. Functionally, cell wall formation. The protein is UDP-N-acetylenolpyruvoylglucosamine reductase of Lactobacillus gasseri (strain ATCC 33323 / DSM 20243 / BCRC 14619 / CIP 102991 / JCM 1131 / KCTC 3163 / NCIMB 11718 / NCTC 13722 / AM63).